The sequence spans 367 residues: NADH-quinone oxidoreductase subunit D (367 aa).

It belongs to the complex I 49 kDa subunit family. In terms of assembly, NDH-1 is composed of 14 different subunits. Subunits NuoB, C, D, E, F, and G constitute the peripheral sector of the complex.

It localises to the cell membrane. The catalysed reaction is a quinone + NADH + 5 H(+)(in) = a quinol + NAD(+) + 4 H(+)(out). NDH-1 shuttles electrons from NADH, via FMN and iron-sulfur (Fe-S) centers, to quinones in the respiratory chain. The immediate electron acceptor for the enzyme in this species is believed to be ubiquinone. Couples the redox reaction to proton translocation (for every two electrons transferred, four hydrogen ions are translocated across the cytoplasmic membrane), and thus conserves the redox energy in a proton gradient. The protein is NADH-quinone oxidoreductase subunit D of Dehalococcoides mccartyi (strain CBDB1).